Here is a 384-residue protein sequence, read N- to C-terminus: 3,7-dimethylxanthine N-methyltransferase 2 (384 aa).

S-adenosyl-L-homocysteine contacts are provided by Y18, C61, N66, D100, L101, S139, F140, and C156. Y157 is a binding site for theobromine. C158 lines the S-adenosyl-L-homocysteine pocket. H160 and W161 together coordinate theobromine. N178 contacts Mg(2+). A theobromine-binding site is contributed by S237. Mg(2+)-binding residues include D260, F262, and N263. Position 368 (Y368) interacts with theobromine.

Belongs to the methyltransferase superfamily. Type-7 methyltransferase family. Requires Mg(2+) as cofactor. In terms of tissue distribution, highly expressed in developing endosperm. Detected in young leaves and flower buds. Present in immature fruits (grains), but barely in mature fruits.

It catalyses the reaction 7-methylxanthine + S-adenosyl-L-methionine = theobromine + S-adenosyl-L-homocysteine + H(+). It carries out the reaction theobromine + S-adenosyl-L-methionine = caffeine + S-adenosyl-L-homocysteine + H(+). The catalysed reaction is 1,7-dimethylxanthine + S-adenosyl-L-methionine = caffeine + S-adenosyl-L-homocysteine + H(+). Its pathway is alkaloid biosynthesis. Involved in the biosynthesis of caffeine. Catalyzes the conversion of 7-methylxanthine (7mX) to theobromine and of theobromine to caffeine. Has 1-N-methylation activity. The polypeptide is 3,7-dimethylxanthine N-methyltransferase 2 (Coffea arabica (Arabian coffee)).